Here is a 775-residue protein sequence, read N- to C-terminus: Glycerol-3-phosphate acyltransferase (775 aa).

An HXXXXD motif motif is present at residues H268 to D273.

The protein belongs to the GPAT/DAPAT family.

It is found in the cell membrane. The catalysed reaction is sn-glycerol 3-phosphate + an acyl-CoA = a 1-acyl-sn-glycero-3-phosphate + CoA. Its pathway is phospholipid metabolism; CDP-diacylglycerol biosynthesis; CDP-diacylglycerol from sn-glycerol 3-phosphate: step 1/3. The sequence is that of Glycerol-3-phosphate acyltransferase (plsB) from Mycobacterium leprae (strain TN).